A 399-amino-acid chain; its full sequence is S-adenosylmethionine synthase (399 aa).

Residue His-17 coordinates ATP. Asp-19 is a Mg(2+) binding site. Glu-45 contributes to the K(+) binding site. L-methionine-binding residues include Glu-58 and Gln-101. The interval 101–111 (QSPDIAQGVDE) is flexible loop. ATP contacts are provided by residues 177 to 179 (DAK), 244 to 245 (RF), Asp-253, 259 to 260 (RK), Ala-276, and Lys-280. Residue Asp-253 participates in L-methionine binding. Lys-284 provides a ligand contact to L-methionine.

This sequence belongs to the AdoMet synthase family. Homotetramer; dimer of dimers. It depends on Mg(2+) as a cofactor. K(+) is required as a cofactor.

It is found in the cytoplasm. The catalysed reaction is L-methionine + ATP + H2O = S-adenosyl-L-methionine + phosphate + diphosphate. Its pathway is amino-acid biosynthesis; S-adenosyl-L-methionine biosynthesis; S-adenosyl-L-methionine from L-methionine: step 1/1. Its function is as follows. Catalyzes the formation of S-adenosylmethionine (AdoMet) from methionine and ATP. The overall synthetic reaction is composed of two sequential steps, AdoMet formation and the subsequent tripolyphosphate hydrolysis which occurs prior to release of AdoMet from the enzyme. In Listeria welshimeri serovar 6b (strain ATCC 35897 / DSM 20650 / CCUG 15529 / CIP 8149 / NCTC 11857 / SLCC 5334 / V8), this protein is S-adenosylmethionine synthase.